We begin with the raw amino-acid sequence, 174 residues long: MHCPFCQHNDTRVIDSRVSEDGTTIRRRRECEACGERFSTLETIELKLPTVVKSDGGREAFDARKLRTSFDRALQKRPVSEEQIEAAVRAVVHQLRMSGEREVGSLRVGEYVMVELRKLDHVGYVRFASVYRSFQDVADFREEIEKLERELPVGSEQLPLLEAALERAGKPGKR.

A zinc finger lies at 3–34 (CPFCQHNDTRVIDSRVSEDGTTIRRRRECEAC). An ATP-cone domain is found at 49-139 (PTVVKSDGGR…VYRSFQDVAD (91 aa)).

Belongs to the NrdR family. Zn(2+) is required as a cofactor.

In terms of biological role, negatively regulates transcription of bacterial ribonucleotide reductase nrd genes and operons by binding to NrdR-boxes. This chain is Transcriptional repressor NrdR, found in Xanthomonas campestris pv. campestris (strain 8004).